We begin with the raw amino-acid sequence, 689 residues long: Glycine--tRNA ligase beta subunit (689 aa).

Belongs to the class-II aminoacyl-tRNA synthetase family. As to quaternary structure, tetramer of two alpha and two beta subunits.

Its subcellular location is the cytoplasm. The catalysed reaction is tRNA(Gly) + glycine + ATP = glycyl-tRNA(Gly) + AMP + diphosphate. This Cronobacter sakazakii (strain ATCC BAA-894) (Enterobacter sakazakii) protein is Glycine--tRNA ligase beta subunit.